We begin with the raw amino-acid sequence, 108 residues long: Ig kappa chain V-V region MOPC 173 (108 aa).

The framework-1 stretch occupies residues 1–23; that stretch reads DIQMTQTTSSLSASLGDRVTISC. Cys23 and Cys88 are oxidised to a cystine. The complementarity-determining-1 stretch occupies residues 24-34; it reads SASQSIGNYLB. The segment at 35-49 is framework-2; it reads WYQQKPDGTVKLLIY. The tract at residues 50–56 is complementarity-determining-2; sequence YTSSLHS. Residues 57 to 88 are framework-3; the sequence is GVPSRFSGSGSGTDYSLTISBLZPZBIATYYC. Positions 89–97 are complementarity-determining-3; the sequence is QQYSKLPRT. A framework-4 region spans residues 98–108; the sequence is FGGGTKLEIKR.

This is Ig kappa chain V-V region MOPC 173 from Mus musculus (Mouse).